The following is a 160-amino-acid chain: Ribosomal RNA large subunit methyltransferase H (160 aa).

S-adenosyl-L-methionine contacts are provided by residues L76, G108, and 127-132 (LGKLTW).

Belongs to the RNA methyltransferase RlmH family. In terms of assembly, homodimer.

It is found in the cytoplasm. The catalysed reaction is pseudouridine(1915) in 23S rRNA + S-adenosyl-L-methionine = N(3)-methylpseudouridine(1915) in 23S rRNA + S-adenosyl-L-homocysteine + H(+). Its function is as follows. Specifically methylates the pseudouridine at position 1915 (m3Psi1915) in 23S rRNA. This Agrobacterium fabrum (strain C58 / ATCC 33970) (Agrobacterium tumefaciens (strain C58)) protein is Ribosomal RNA large subunit methyltransferase H.